Reading from the N-terminus, the 390-residue chain is Dual-specificity RNA methyltransferase RlmN (390 aa).

Glu111 acts as the Proton acceptor in catalysis. The 240-residue stretch at Glu117 to Asp356 folds into the Radical SAM core domain. A disulfide bond links Cys124 and Cys361. Cys131, Cys135, and Cys138 together coordinate [4Fe-4S] cluster. S-adenosyl-L-methionine is bound by residues Gly185–Glu186, Ser217, Ser239–His241, and Asn318. The active-site S-methylcysteine intermediate is the Cys361.

Belongs to the radical SAM superfamily. RlmN family. The cofactor is [4Fe-4S] cluster.

It is found in the cytoplasm. It catalyses the reaction adenosine(2503) in 23S rRNA + 2 reduced [2Fe-2S]-[ferredoxin] + 2 S-adenosyl-L-methionine = 2-methyladenosine(2503) in 23S rRNA + 5'-deoxyadenosine + L-methionine + 2 oxidized [2Fe-2S]-[ferredoxin] + S-adenosyl-L-homocysteine. The enzyme catalyses adenosine(37) in tRNA + 2 reduced [2Fe-2S]-[ferredoxin] + 2 S-adenosyl-L-methionine = 2-methyladenosine(37) in tRNA + 5'-deoxyadenosine + L-methionine + 2 oxidized [2Fe-2S]-[ferredoxin] + S-adenosyl-L-homocysteine. In terms of biological role, specifically methylates position 2 of adenine 2503 in 23S rRNA and position 2 of adenine 37 in tRNAs. m2A2503 modification seems to play a crucial role in the proofreading step occurring at the peptidyl transferase center and thus would serve to optimize ribosomal fidelity. The sequence is that of Dual-specificity RNA methyltransferase RlmN from Edwardsiella ictaluri (strain 93-146).